Here is a 1029-residue protein sequence, read N- to C-terminus: Carbamoyl phosphate synthase large chain (1029 aa).

Positions Met1–Glu402 are carboxyphosphate synthetic domain. Residues Arg129, Arg169, Gly175, Gly176, Glu208, Ile210, Glu215, Gly241, Val242, His243, Gln285, and Glu299 each contribute to the ATP site. Residues Gln133–Val328 form the ATP-grasp 1 domain. Mg(2+)-binding residues include Gln285, Glu299, and Asn301. Positions 285, 299, and 301 each coordinate Mn(2+). Residues Ser403–Val546 are oligomerization domain. Residues Thr547–Lys929 form a carbamoyl phosphate synthetic domain region. Residues Asn671 to Val863 form the ATP-grasp 2 domain. Residues Arg707, Gln747, Leu749, Glu754, Gly779, Val780, His781, Ser782, Gln822, and Glu834 each coordinate ATP. Residues Gln822, Glu834, and Asn836 each coordinate Mg(2+). Residues Gln822, Glu834, and Asn836 each coordinate Mn(2+). The 99-residue stretch at Ser930–Ala1028 folds into the MGS-like domain. Residues Ser930 to Ser1029 are allosteric domain.

Belongs to the CarB family. As to quaternary structure, composed of two chains; the small (or glutamine) chain promotes the hydrolysis of glutamine to ammonia, which is used by the large (or ammonia) chain to synthesize carbamoyl phosphate. Tetramer of heterodimers (alpha,beta)4. Mg(2+) is required as a cofactor. Mn(2+) serves as cofactor.

It carries out the reaction hydrogencarbonate + L-glutamine + 2 ATP + H2O = carbamoyl phosphate + L-glutamate + 2 ADP + phosphate + 2 H(+). It catalyses the reaction hydrogencarbonate + NH4(+) + 2 ATP = carbamoyl phosphate + 2 ADP + phosphate + 2 H(+). It participates in amino-acid biosynthesis; L-arginine biosynthesis; carbamoyl phosphate from bicarbonate: step 1/1. It functions in the pathway pyrimidine metabolism; UMP biosynthesis via de novo pathway; (S)-dihydroorotate from bicarbonate: step 1/3. Its function is as follows. Large subunit of the glutamine-dependent carbamoyl phosphate synthetase (CPSase). CPSase catalyzes the formation of carbamoyl phosphate from the ammonia moiety of glutamine, carbonate, and phosphate donated by ATP, constituting the first step of 2 biosynthetic pathways, one leading to arginine and/or urea and the other to pyrimidine nucleotides. The large subunit (synthetase) binds the substrates ammonia (free or transferred from glutamine from the small subunit), hydrogencarbonate and ATP and carries out an ATP-coupled ligase reaction, activating hydrogencarbonate by forming carboxy phosphate which reacts with ammonia to form carbamoyl phosphate. This chain is Carbamoyl phosphate synthase large chain, found in Deinococcus geothermalis (strain DSM 11300 / CIP 105573 / AG-3a).